Consider the following 165-residue polypeptide: UPF0254 protein MMP0935 (165 aa).

Belongs to the UPF0254 family.

This is UPF0254 protein MMP0935 from Methanococcus maripaludis (strain DSM 14266 / JCM 13030 / NBRC 101832 / S2 / LL).